Consider the following 132-residue polypeptide: Small ribosomal subunit protein uS8 (132 aa).

Belongs to the universal ribosomal protein uS8 family. As to quaternary structure, part of the 30S ribosomal subunit. Contacts proteins S5 and S12.

Its function is as follows. One of the primary rRNA binding proteins, it binds directly to 16S rRNA central domain where it helps coordinate assembly of the platform of the 30S subunit. The chain is Small ribosomal subunit protein uS8 from Geotalea uraniireducens (strain Rf4) (Geobacter uraniireducens).